The sequence spans 299 residues: Phosphoribosylaminoimidazole-succinocarboxamide synthase (299 aa).

It belongs to the SAICAR synthetase family.

It catalyses the reaction 5-amino-1-(5-phospho-D-ribosyl)imidazole-4-carboxylate + L-aspartate + ATP = (2S)-2-[5-amino-1-(5-phospho-beta-D-ribosyl)imidazole-4-carboxamido]succinate + ADP + phosphate + 2 H(+). It participates in purine metabolism; IMP biosynthesis via de novo pathway; 5-amino-1-(5-phospho-D-ribosyl)imidazole-4-carboxamide from 5-amino-1-(5-phospho-D-ribosyl)imidazole-4-carboxylate: step 1/2. This chain is Phosphoribosylaminoimidazole-succinocarboxamide synthase, found in Maridesulfovibrio salexigens (strain ATCC 14822 / DSM 2638 / NCIMB 8403 / VKM B-1763) (Desulfovibrio salexigens).